The sequence spans 359 residues: Peptide chain release factor 1 (359 aa).

Q235 carries the N5-methylglutamine modification. The interval 283–309 (QKAESERSQARRSQVGSGDRSERIRTY) is disordered.

The protein belongs to the prokaryotic/mitochondrial release factor family. Post-translationally, methylated by PrmC. Methylation increases the termination efficiency of RF1.

The protein localises to the cytoplasm. Its function is as follows. Peptide chain release factor 1 directs the termination of translation in response to the peptide chain termination codons UAG and UAA. The sequence is that of Peptide chain release factor 1 from Brucella canis (strain ATCC 23365 / NCTC 10854 / RM-666).